The primary structure comprises 90 residues: Secretoglobin family 1D member 2 (90 aa).

An N-terminal signal peptide occupies residues Met1–Ala21.

This sequence belongs to the secretoglobin family. Lipophilin subfamily. As to expression, highest expression was found in skeletal muscle. Expressed as well in thymus, trachea, kidney, steroid responsive tissues (prostate, testis, uterus, breast and ovary) and salivary gland.

It is found in the secreted. Its function is as follows. May bind androgens and other steroids, may also bind estramustine, a chemotherapeutic agent used for prostate cancer. May be under transcriptional regulation of steroid hormones. This Homo sapiens (Human) protein is Secretoglobin family 1D member 2 (SCGB1D2).